A 94-amino-acid chain; its full sequence is UPF0213 protein BH0048 (94 aa).

The 76-residue stretch at Met1–Gln76 folds into the GIY-YIG domain.

It belongs to the UPF0213 family.

This Halalkalibacterium halodurans (strain ATCC BAA-125 / DSM 18197 / FERM 7344 / JCM 9153 / C-125) (Bacillus halodurans) protein is UPF0213 protein BH0048.